A 1055-amino-acid polypeptide reads, in one-letter code: Inactive exonuclease DIS3L2 (1055 aa).

2 disordered regions span residues 1–109 and 229–249; these read MKSA…SSPE and SAAK…KARQ. A compositionally biased stretch (basic residues) spans 17 to 32; sequence HKKKRNRPQKQNRRSK. Basic and acidic residues predominate over residues 39 to 59; that stretch reads EDAHVEESLDGRDSSRSKAKD. The segment covering 97-108 has biased composition (low complexity); it reads PRRSASPLLSSP. The CSD2 domain occupies 367–446; the sequence is YVQLMPADPR…PQINAILYQN (80 aa). One can recognise an RNB domain in the interval 476–824; sequence RKDLRDLCVL…VHRALAAALE (349 aa). The Mg(2+) site is built by aspartate 488 and aspartate 497.

The protein belongs to the RNR ribonuclease family. DIS3L2 subfamily.

It localises to the cytoplasm. In terms of biological role, probable inactive 3'-5'-exoribonuclease. Is unable to complement the growth defect of a yeast mutant lacking RRP44 exonuclease. In Arabidopsis thaliana (Mouse-ear cress), this protein is Inactive exonuclease DIS3L2.